The chain runs to 446 residues: Chromosomal replication initiator protein DnaA (446 aa).

Positions 1–82 (MENILDLWNQ…ELSIKFVIPQ (82 aa)) are domain I, interacts with DnaA modulators. The segment at 83–103 (NQDVEDFMPKPQVKKAVKEDT) is domain II. The domain III, AAA+ region stretch occupies residues 104–332 (SDFPQNMLNP…VAYSSLINKD (229 aa)). The ATP site is built by Gly154, Leu155, Gly156, Lys157, and Thr158. Thr158 lines the Mg(2+) pocket. The short motif at 182 to 206 (SEKFTNEFINSIRDNKAVDFRNRYR) is the Initiator specific motif (ISM) element. Residues Asp214 and Asp215 each contribute to the Mg(2+) site. Positions 333 to 346 (INADLAAEALKDII) are linker. Residues 347–446 (PSSKPKVITI…HVKEIKEQLK (100 aa)) form a domain IV, binds dsDNA region.

It belongs to the DnaA family. The DNA replisome assembles sequentially on oriC in this order; DnaA, DnaD, DnaB, DnaI-DnaC helicase. Oligomerizes as a right-handed, spiral filament on DNA at oriC. Forms an ATP-dependent helix on DNA at oriC; both DnaD and YabA inhibit formation of the DnaA helix. Forms an ATP-dependent oligomer, formation is stimulated by ds- and ssDNA; monomeric ADP-Soj inhibits oligomer formation. Interacts with DnaD. Interacts with YabA, and via YabA, with the replication machinery subunit beta sliding clamp DnaN. Interacts with YabA via domain IIIa (residues 109-275). Isolated domain I forms a 1:1 complex with SirA. Interacts with Soj, probably via domain III. Interacts via domains I and III with CcrZ. Interacts via domain IV with skin prophage-like element protein YqaH.

It localises to the cytoplasm. It is found in the nucleoid. The catalysed reaction is ATP + H2O = ADP + phosphate + H(+). Oligomerization of DnaA can be controlled by Soj; monomeric ADP-Soj inhibits formation of the DnaA helix. YabA prevents the cooperative binding of DnaA-ATP to oriC-containing sequences; increased levels of DnaN (beta sliding clamp subunit of DNA polymerase) removes YabA from association with DnaA on the chromosome, enabling increased association of DnaA with its chromosomal binding sites. Both Soj and YabA chase DnaA from oriC site, YabA tethers DnaA to the DNA replication fork via the beta sliding clamp subunit DnaN. SirA antagonizes the ability of DnaA to bind to the replication origin, and thus decreases replication inititation during sporulation. Small protein YqaH, part of the skin prophage-like element, binds to DnaA and antagonizes its replication initiation and transcriptional regulation activities. In terms of biological role, plays an essential role in the initiation and regulation of chromosomal replication. ATP-DnaA binds to the origin of replication (oriC) to initiate formation of the DNA replication initiation complex once per cell cycle. Binds directly to oriC at a 9 bp consensus (DnaA box): 5'-TTATCCACA-3' and separates the double-stranded (ds)DNA. Forms a right-handed helical filament on oriC DNA; dsDNA binds to the exterior of the filament while single-stranded (ss)DNA is stabilized in the filament's interior. The ATP-DnaA-oriC complex binds and stabilizes one strand of the AT-rich DNA unwinding element (DUE or basal unwinding system, BUS), permitting loading of DNA polymerase. Binds ATP with high affinity, ADP with lower affinity, but not AMP, cAMP or cGMP; ATP stimulates binding to DnaA boxes. Once bound promotes sequence-specific strand separation of DnaA-trios (3'-GAT-5' consensus) adjacent to oriC in the presence of ATP but not ADP. Domains III and IV are sufficient to separate dsDNA strands. The 'initiator specific motif' (ISM) of domain III contacts the middle adenine residue of the DnaA-trio probably stretching and stabilizing ssDNA. DnaA-trio recognition is co-operative and depends on DnaA self-assembly. The ssDNA serves as an assembly region for the replication machinery. Tethered to DnaN (beta sliding clamp subunit of DNA polymerase) and thus replication forks by YabA. During replication initiation DnaA-ATP binds cooperatively to sequences in oriC. YabA prevents this cooperative binding while still allowing DnaA to bind DNA. During the cell cycle an initial phase occurs in which DnaA is associated with origin regions, then the origin regions become spatially separate from the centrally sequestered DnaA molecules, and most DnaA molecules are unable to reassociate with origin regions. Does not require YabA to bind DNA. During sporulation SirA prevents DnaA association with the replication origin to prevent excessive chromosome replication. Overexpression induces the SOS response; increasing expression of downstream dnaN blocks this induction. Over-initiation of DNA replication is very deleterious; isolated suppressors in relA, ndrR, dnaC, cshA and crrZ increase replication elongation, decrease replication inititation or lead to a decrease in the replicative DNA helicase. Binds acidic phospholipids. Its function is as follows. The half-life of ADP-DnaA is 1.5 minutes, of ATP-DnaA is 5 minutes at 37 degrees Celsius; in E.coli the half-life of ADP-DnaA is about 45 minutes. Functionally, also acts as a transcriptional regulator. DnaA inhibits its own gene expression. DnaA binds specifically to the promoter regions of at least 20 operons (56 genes), including itself, sda and dnaB, and probably controls their expression in response to DNA replication inhibition. The sequence is that of Chromosomal replication initiator protein DnaA from Bacillus subtilis (strain 168).